Consider the following 213-residue polypeptide: Putative transmembrane protein DDB_G0267860 (213 aa).

The signal sequence occupies residues 1–22 (MKTKILLLNFIIIFFLINVNLA). The Extracellular segment spans residues 23–191 (IKKDSPFKEI…SSKFDSSTSS (169 aa)). 2 N-linked (GlcNAc...) asparagine glycosylation sites follow: N92 and N114. A helical membrane pass occupies residues 192–212 (ISINTLAILSLLFLIFINKLI). Position 213 (N213) is a topological domain, cytoplasmic.

The protein localises to the membrane. The polypeptide is Putative transmembrane protein DDB_G0267860 (Dictyostelium discoideum (Social amoeba)).